A 248-amino-acid chain; its full sequence is ATP synthase subunit a (248 aa).

Helical transmembrane passes span 34-54 (TNVT…LVAG), 91-111 (YFPY…LGLI), 121-141 (IAVT…IGFV), 147-167 (FLSL…LAVI), 197-217 (FAGF…VMAI), and 220-240 (LEVL…CVYL).

Belongs to the ATPase A chain family. F-type ATPases have 2 components, CF(1) - the catalytic core - and CF(0) - the membrane proton channel. CF(1) has five subunits: alpha(3), beta(3), gamma(1), delta(1), epsilon(1). CF(0) has four main subunits: a, b, b' and c.

It is found in the cell inner membrane. Key component of the proton channel; it plays a direct role in the translocation of protons across the membrane. The sequence is that of ATP synthase subunit a from Dinoroseobacter shibae (strain DSM 16493 / NCIMB 14021 / DFL 12).